Consider the following 690-residue polypeptide: Cysteine-rich receptor-like protein kinase 21 (690 aa).

An N-terminal signal peptide occupies residues 1-24 (MQKNKMVDLRAIFWFVVISSCAVA). The Gnk2-homologous 1 domain maps to 25 to 129 (APTCIQRSDF…CLVRYSNHLI (105 aa)). The Extracellular portion of the chain corresponds to 25-281 (APTCIQRSDF…KDGKNISTGS (257 aa)). Asn-130, Asn-148, Asn-155, Asn-220, Asn-268, and Asn-276 each carry an N-linked (GlcNAc...) asparagine glycan. Residues 140 to 246 (AEYIEYKYNT…CFMRWDLQPF (107 aa)) enclose the Gnk2-homologous 2 domain. The helical transmembrane segment at 282 to 302 (IVAIAVVSVVVSTVLLALGYA) threads the bilayer. Residues 303–690 (VSRRRKAYQS…DASITSVRPR (388 aa)) lie on the Cytoplasmic side of the membrane. Residues 363–640 (FHKSNKLGHG…IFRMLTNVSI (278 aa)) enclose the Protein kinase domain. ATP is bound by residues 369–377 (LGHGGFGAV) and Lys-391. Tyr-436 bears the Phosphotyrosine mark. Asp-488 functions as the Proton acceptor in the catalytic mechanism. Position 492 is a phosphoserine (Ser-492). Thr-528 carries the phosphothreonine modification. A Phosphotyrosine modification is found at Tyr-536.

This sequence belongs to the protein kinase superfamily. Ser/Thr protein kinase family. CRK subfamily.

The protein localises to the membrane. It catalyses the reaction L-seryl-[protein] + ATP = O-phospho-L-seryl-[protein] + ADP + H(+). It carries out the reaction L-threonyl-[protein] + ATP = O-phospho-L-threonyl-[protein] + ADP + H(+). This Arabidopsis thaliana (Mouse-ear cress) protein is Cysteine-rich receptor-like protein kinase 21 (CRK21).